The following is a 493-amino-acid chain: Glutamyl-tRNA(Gln) amidotransferase subunit A (493 aa).

Active-site charge relay system residues include Lys78 and Ser158. The active-site Acyl-ester intermediate is Ser182.

Belongs to the amidase family. GatA subfamily. As to quaternary structure, heterotrimer of A, B and C subunits.

The enzyme catalyses L-glutamyl-tRNA(Gln) + L-glutamine + ATP + H2O = L-glutaminyl-tRNA(Gln) + L-glutamate + ADP + phosphate + H(+). In terms of biological role, allows the formation of correctly charged Gln-tRNA(Gln) through the transamidation of misacylated Glu-tRNA(Gln) in organisms which lack glutaminyl-tRNA synthetase. The reaction takes place in the presence of glutamine and ATP through an activated gamma-phospho-Glu-tRNA(Gln). This is Glutamyl-tRNA(Gln) amidotransferase subunit A from Azorhizobium caulinodans (strain ATCC 43989 / DSM 5975 / JCM 20966 / LMG 6465 / NBRC 14845 / NCIMB 13405 / ORS 571).